We begin with the raw amino-acid sequence, 118 residues long: Large ribosomal subunit protein bL19 (118 aa).

The protein belongs to the bacterial ribosomal protein bL19 family.

Functionally, this protein is located at the 30S-50S ribosomal subunit interface and may play a role in the structure and function of the aminoacyl-tRNA binding site. The polypeptide is Large ribosomal subunit protein bL19 (Campylobacter concisus (strain 13826)).